The sequence spans 209 residues: Large ribosomal subunit protein bL25 (209 aa).

A disordered region spans residues 183 to 209; sequence TAGERPAAEPAAAPGAAPAAGPEEAEE. Residues 184–209 show a composition bias toward low complexity; that stretch reads AGERPAAEPAAAPGAAPAAGPEEAEE.

Belongs to the bacterial ribosomal protein bL25 family. CTC subfamily. In terms of assembly, part of the 50S ribosomal subunit; part of the 5S rRNA/L5/L18/L25 subcomplex. Contacts the 5S rRNA. Binds to the 5S rRNA independently of L5 and L18.

Its function is as follows. This is one of the proteins that binds to the 5S RNA in the ribosome where it forms part of the central protuberance. This is Large ribosomal subunit protein bL25 from Pelotomaculum thermopropionicum (strain DSM 13744 / JCM 10971 / SI).